Consider the following 203-residue polypeptide: Cilia- and flagella-associated protein 20 (203 aa).

It belongs to the CFAP20 family.

The protein resides in the nucleus. It is found in the cytoplasm. The protein localises to the cytoskeleton. Its subcellular location is the microtubule organizing center. It localises to the centrosome. The protein resides in the centriole. It is found in the cilium basal body. The protein localises to the cilium axoneme. Its function is as follows. Cilium- and flagellum-specific protein that plays a role in axonemal structure organization and motility. Microtubule inner protein (MIP) part of the dynein-decorated doublet microtubules (DMTs) in cilia axoneme, which is required for motile cilia beating. Involved in the regulation of the size and morphology of cilia. Required for axonemal microtubules polyglutamylation. The sequence is that of Cilia- and flagella-associated protein 20 from Caenorhabditis briggsae.